The sequence spans 999 residues: Sarcoplasmic/endoplasmic reticulum calcium ATPase 3 (999 aa).

An N-acetylmethionine modification is found at Met-1. Topologically, residues Met-1–Ser-48 are cytoplasmic. At Ser-17 the chain carries Phosphoserine. Thr-19 is modified (phosphothreonine). Residue Ser-25 is modified to Phosphoserine. A helical membrane pass occupies residues Leu-49 to Ala-69. The Extracellular segment spans residues Leu-70–Val-89. A helical membrane pass occupies residues Glu-90–Arg-110. Over Asn-111–Leu-253 the chain is Cytoplasmic. Residues Asp-254–Val-273 traverse the membrane as a helical segment. The Extracellular segment spans residues Ile-274–Tyr-295. A helical membrane pass occupies residues Phe-296–Ala-313. Ca(2+) contacts are provided by Val-304, Ala-305, Ile-307, and Glu-309. The Cytoplasmic portion of the chain corresponds to Val-314–Met-757. Asp-351 serves as the catalytic 4-aspartylphosphate intermediate. Asp-351 and Thr-353 together coordinate Mg(2+). Residue Thr-353 participates in ATP binding. The interaction with phospholamban 1 stretch occupies residues Ala-370–Gln-400. Thr-415 carries the phosphothreonine modification. The ATP site is built by Glu-442, Arg-489, Lys-515, Arg-560, Thr-625, Gly-626, and Asp-627. Ser-662 bears the Phosphoserine mark. ATP contacts are provided by Arg-678 and Lys-684. Asp-703 lines the Mg(2+) pocket. Residue Asn-706 participates in ATP binding. The chain crosses the membrane as a helical span at residues Lys-758–Leu-777. Ca(2+)-binding residues include Asn-768 and Glu-771. The Extracellular portion of the chain corresponds to Thr-778–Leu-787. Residues Ile-788 to Gly-808 form a helical membrane-spanning segment. The tract at residues Ile-788 to Gly-808 is interaction with phospholamban 2. The Ca(2+) site is built by Asn-796, Thr-799, and Asp-800. Residues Phe-809–Leu-828 are Cytoplasmic-facing. The helical transmembrane segment at Ile-829 to Ala-851 threads the bilayer. Topologically, residues Ala-852–Thr-897 are extracellular. A disulfide bridge links Cys-876 with Cys-888. Residues Thr-898–Ser-917 form a helical membrane-spanning segment. Glu-908 contributes to the Ca(2+) binding site. At Glu-918 to Asn-930 the chain is on the cytoplasmic side. The helical transmembrane segment at Pro-931 to Leu-949 threads the bilayer. Residues Val-950 to Gly-964 are Extracellular-facing. Residues Arg-965–Lys-985 form a helical membrane-spanning segment. The Cytoplasmic segment spans residues Tyr-986 to Gln-999.

It belongs to the cation transport ATPase (P-type) (TC 3.A.3) family. Type IIA subfamily. As to quaternary structure, interacts with sarcolipin (SLN). Interacts with phospholamban (PLN). Interacts with myoregulin (MRLN). Interacts with DWORF. Interacts with VMP1. Interacts with TUNAR; the interaction occurs at low levels in low glucose conditions and is increased by high glucose levels. Requires Mg(2+) as cofactor. As to expression, expressed in endothelial tissues.

The protein localises to the endoplasmic reticulum membrane. It localises to the sarcoplasmic reticulum membrane. It carries out the reaction Ca(2+)(in) + ATP + H2O = Ca(2+)(out) + ADP + phosphate + H(+). Inhibited by sarcolipin (SLN), phospholamban (PLN) and myoregulin (MRLN). Enhanced by DWORF; DWORF increases activity by displacing sarcolipin (SLN), phospholamban (PLN) and myoregulin (MRLN). This magnesium-dependent enzyme catalyzes the hydrolysis of ATP coupled with the transport of calcium. Transports calcium ions from the cytosol into the sarcoplasmic/endoplasmic reticulum lumen. Contributes to calcium sequestration involved in muscular excitation/contraction. In Sus scrofa (Pig), this protein is Sarcoplasmic/endoplasmic reticulum calcium ATPase 3 (ATP2A3).